Here is a 641-residue protein sequence, read N- to C-terminus: Chaperone protein HtpG (641 aa).

The tract at residues 1 to 348 is a; substrate-binding; it reads MTTATEKQTL…SNDLSLNVSR (348 aa). The tract at residues 349-565 is b; it reads EILQNDKAVE…AYDMGVQMRR (217 aa). A c region spans residues 566–641; sequence IMEAAGQALP…KLLLELSNAG (76 aa).

This sequence belongs to the heat shock protein 90 family. Homodimer.

The protein localises to the cytoplasm. Molecular chaperone. Has ATPase activity. This chain is Chaperone protein HtpG, found in Hahella chejuensis (strain KCTC 2396).